The chain runs to 275 residues: MVRKIAIYGKGGIGKSTTQQNTAAAMSYFHGKNVMIHGCDPKADSTRLILGGKMQTTMMDTLRELGEVACTPDKVIETGFGGIKCVESGGPEPGVGCAGRGVITAITLMERHGVYEKDLDFVFFDVLGDVVCGGFAMPVRDGKAEEIYIVASGEMMALYAANNICKGMVKYARQSGVRLGGIICNSRNVDGEKELLEEFCERIGTQMIHFVPRDNIVQKAEFNKKSVIEFDPECNQSQEYRELARKIIENKDFVIPEPMTMDEMEELVVKYGVMD.

Position 9-16 (9-16 (GKGGIGKS)) interacts with ATP. Position 97 (Cys-97) interacts with [4Fe-4S] cluster. ADP-ribosylarginine; by dinitrogenase reductase ADP-ribosyltransferase is present on Arg-100. Cys-132 is a [4Fe-4S] cluster binding site.

The protein belongs to the NifH/BchL/ChlL family. As to quaternary structure, homodimer. [4Fe-4S] cluster is required as a cofactor. Post-translationally, the reversible ADP-ribosylation of Arg-100 inactivates the nitrogenase reductase and regulates nitrogenase activity.

It carries out the reaction N2 + 8 reduced [2Fe-2S]-[ferredoxin] + 16 ATP + 16 H2O = H2 + 8 oxidized [2Fe-2S]-[ferredoxin] + 2 NH4(+) + 16 ADP + 16 phosphate + 6 H(+). Functionally, the key enzymatic reactions in nitrogen fixation are catalyzed by the nitrogenase complex, which has 2 components: the iron protein and the molybdenum-iron protein. The sequence is that of Nitrogenase iron protein 1 (nifH1) from Methanothermobacter thermautotrophicus (strain ATCC 29096 / DSM 1053 / JCM 10044 / NBRC 100330 / Delta H) (Methanobacterium thermoautotrophicum).